We begin with the raw amino-acid sequence, 395 residues long: MQDEAMRRSGANSPAGDSLADRWRAARPPVAGLHLDSAACSRQSFAALDAAAQHARHEAEVGGYVAAEAAAAVLDAGRAAVAALSGLPDAEVVFTTGSLHALDLLLGSWPGENRTLACLPGEYGPNLAVMAAHGFDVRPLPTLQDGRVALDDAAFMLADDPPDLVHLTVVASHRGVAQPLAMVAQLCTELKLPLVVDAAQGLGHVDCAVGADVTYASSRKWIAGPRGVGVLAVRPELMERLRARLPAPDWMPPLTVAQQLGFGEANVAARVGFSVALGEHLACGPQAIRARLAELGDIARTVLADVSGWRVVEAVDEPSAITTLAPIDGADPAAVRAWLLSQRRIVTTYAGVERAPLELPAPVLRISPHVDNTADDLDAFAEALVAATAATSGER.

Residues 1–21 are disordered; it reads MQDEAMRRSGANSPAGDSLAD. An N6-(pyridoxal phosphate)lysine modification is found at lysine 220.

This sequence belongs to the class-V pyridoxal-phosphate-dependent aminotransferase family. EgtE subfamily. It depends on pyridoxal 5'-phosphate as a cofactor.

It carries out the reaction S-(hercyn-2-yl)-L-cysteine S-oxide + AH2 + H(+) = ergothioneine + pyruvate + A + NH4(+). It functions in the pathway amino-acid biosynthesis; ergothioneine biosynthesis. Probably catalyzes the conversion of hercynylcysteine sulfoxide to ergothioneine. ERG is one of the major redox buffers which protects bacteria against redox stressors and antibiotics; loss of ERG or mycothiol (MSH, the other major redox buffer in this bacteria) leads to respiratory alterations and bioenergetic deficiencies that negatively impact virulence. In Mycobacterium tuberculosis (strain CDC 1551 / Oshkosh), this protein is Probable hercynylcysteine sulfoxide lyase.